Consider the following 1272-residue polypeptide: Fused isobutyryl-CoA mutase (1272 aa).

The 139-residue stretch at 20–158 folds into the B12-binding domain; it reads RLRFVTAAAL…ARCAEGARAA (139 aa). An adenosylcob(III)alamin-binding site is contributed by His-33. Residues 163 to 536 form a GTPase chaperone MeaI region; it reads ESQVGAWAAE…YRHVAEALRK (374 aa). The interval 193–240 is disordered; it reads GAVARNPSSEASRVAAAGRGDHLDRGVRAASTADTADTANTANTANTA. Over residues 221-240 the composition is skewed to low complexity; that stretch reads AASTADTADTANTANTANTA. 334–339 serves as a coordination point for GTP; it reads GAGKSS. Positions 338, 363, 364, and 377 each coordinate Mg(2+). Arg-380 is a binding site for GTP. 2 residues coordinate Mg(2+): Glu-429 and Thr-430. Position 476–479 (476–479) interacts with GTP; it reads NKFD. The tract at residues 537-758 is linker; that stretch reads HGLRSGGGRL…MLDNLPGYFP (222 aa). Low complexity-rich tracts occupy residues 614 to 631 and 639 to 663; these read TVAT…KANA and ANAS…ATPT. Positions 614–667 are disordered; it reads TVATSASPGASASSKANACTSTSSKANASPGANTTANSNASATSGTATPTDALN. Positions 766, 801, 907, 951, 1000, 1035, and 1040 each coordinate substrate. 2 residues coordinate GTP: Glu-1152 and Asn-1271.

It belongs to the IcmF family. In terms of assembly, homodimer. It depends on adenosylcob(III)alamin as a cofactor. Requires Mg(2+) as cofactor.

It carries out the reaction 2-methylpropanoyl-CoA = butanoyl-CoA. The enzyme catalyses GTP + H2O = GDP + phosphate + H(+). Functionally, catalyzes the reversible interconversion of isobutyryl-CoA and n-butyryl-CoA, using radical chemistry. Also exhibits GTPase activity, associated with its G-protein domain (MeaI) that functions as a chaperone that assists cofactor delivery and proper holo-enzyme assembly. Does not exhibit methylmalonyl-CoA mutase (MCM) activity. This is Fused isobutyryl-CoA mutase from Paraburkholderia xenovorans (strain LB400).